Reading from the N-terminus, the 319-residue chain is Serine/threonine-protein phosphatase PP1 isozyme 2 (319 aa).

4 residues coordinate Mn(2+): aspartate 61, histidine 63, aspartate 89, and asparagine 121. Catalysis depends on histidine 122, which acts as the Proton donor. The Mn(2+) site is built by histidine 170 and histidine 245.

It belongs to the PPP phosphatase family. PP-1 subfamily. Requires Mn(2+) as cofactor.

The enzyme catalyses O-phospho-L-seryl-[protein] + H2O = L-seryl-[protein] + phosphate. It carries out the reaction O-phospho-L-threonyl-[protein] + H2O = L-threonyl-[protein] + phosphate. This chain is Serine/threonine-protein phosphatase PP1 isozyme 2, found in Acetabularia peniculus (Green alga).